A 385-amino-acid chain; its full sequence is 8-amino-7-oxononanoate synthase (385 aa).

Arginine 21 serves as a coordination point for substrate. 108-109 provides a ligand contact to pyridoxal 5'-phosphate; the sequence is GF. Position 133 (histidine 133) interacts with substrate. 3 residues coordinate pyridoxal 5'-phosphate: serine 179, histidine 207, and threonine 233. An N6-(pyridoxal phosphate)lysine modification is found at lysine 236. Threonine 352 contributes to the substrate binding site.

The protein belongs to the class-II pyridoxal-phosphate-dependent aminotransferase family. BioF subfamily. Homodimer. Pyridoxal 5'-phosphate serves as cofactor.

It carries out the reaction 6-carboxyhexanoyl-[ACP] + L-alanine + H(+) = (8S)-8-amino-7-oxononanoate + holo-[ACP] + CO2. The protein operates within cofactor biosynthesis; biotin biosynthesis. Its function is as follows. Catalyzes the decarboxylative condensation of pimeloyl-[acyl-carrier protein] and L-alanine to produce 8-amino-7-oxononanoate (AON), [acyl-carrier protein], and carbon dioxide. The chain is 8-amino-7-oxononanoate synthase from Salmonella arizonae (strain ATCC BAA-731 / CDC346-86 / RSK2980).